A 4218-amino-acid chain; its full sequence is Protein Obscurin (4218 aa).

The region spanning 3 to 71 (AVADIVFVSR…PIDILEFNPT (69 aa)) is the SH3 domain. Residues 86–264 (RKLTILRELV…LSVPSRAYDN (179 aa)) enclose the DH domain. A coiled-coil region spans residues 439–466 (SKETKERLQHEQQELLKLEQEAIELYKK). Disordered stretches follow at residues 465–592 (KKQQ…SHSK), 684–703 (SLRD…QQGY), 728–750 (SGAN…NFTR), and 923–1010 (RYET…EDRP). Low complexity-rich tracts occupy residues 466–490 (KQQS…VKSS) and 505–517 (AQVK…KVVS). Over residues 578 to 592 (KEVRKEVPPSASHSK) the composition is skewed to basic and acidic residues. The segment covering 923-935 (RYETKTRDYDRGT) has biased composition (basic and acidic residues). Polar residues predominate over residues 936–948 (SYDSTVERSQYGI). 2 stretches are compositionally biased toward basic and acidic residues: residues 950–962 (SRRD…KVEA) and 972–986 (TESR…RAES). The segment covering 987-996 (RASYSVAESR) has biased composition (low complexity). 15 Ig-like C2-type domains span residues 1017-1103 (PVVV…TTVS), 1152-1298 (PRVK…AELS), 1313-1400 (PTLV…SSIN), 1504-1594 (PVIV…TQLL), 1599-1689 (PEFT…CVVT), 1694-1785 (PKVK…CKVA), 1815-1906 (PEIV…LSLS), 2018-2107 (PEIS…FNLA), 2113-2214 (PTFI…FKLA), 2220-2305 (PSFV…EKVA), 2318-2409 (PKFL…VEIV), 2415-2505 (PVFV…AKLY), 2519-2609 (PQFV…ANVR), 2614-2698 (PPVF…KDIT), and 2716-2792 (PPVF…SCRI). A disulfide bridge links Cys-1199 with Cys-1282. A disulfide bridge connects residues Cys-2739 and Cys-2790. The region spanning 2832–2933 (APPPLSEGPI…TYRQKLVPDP (102 aa)) is the Fibronectin type-III 1 domain. Residues 3186 to 3440 (YDIGDELGRG…VKTALKHPWF (255 aa)) form the Protein kinase 1 domain. ATP-binding residues include Gly-3198, Lys-3215, Glu-3260, Ala-3262, Glu-3266, Lys-3310, and Asp-3326. The 85-residue stretch at 3654–3738 (PFFREKPQTI…ARNKVGQTVA (85 aa)) folds into the Ig-like C2-type 16 domain. Residues 3750-3843 (APDSPEISAN…IPVSASTVGG (94 aa)) enclose the Fibronectin type-III 2 domain. Positions 3897-4151 (YSFISEIARG…TEDCLEHRWL (255 aa)) constitute a Protein kinase 2 domain.

This sequence belongs to the protein kinase superfamily. CAMK Ser/Thr protein kinase family. Interacts with myosin. May interact (via protein kinase domain 1) with ball. May interact (via protein kinase domain 1 or 2) with mask. May interact (via protein kinase domain 2) with Tm1/tropomyosin-1. Expressed in the thoracic muscles including the indirect flight muscles (IFM) (at protein level).

The protein resides in the cytoplasm. It is found in the myofibril. The protein localises to the sarcomere. Its subcellular location is the m line. In terms of biological role, structural component of the muscle M line which is involved in assembly and organization of sarcomere. Required for the development and organization of indirect flight muscle sarcomeres by regulating the formation of M line and H zone and the correct assembly of thick and thin filaments in the sarcomere. Lacks serine/threonine-protein kinase activity. The sequence is that of Protein Obscurin from Drosophila melanogaster (Fruit fly).